A 370-amino-acid chain; its full sequence is Peptide chain release factor 1 (370 aa).

Residue Gln-239 is modified to N5-methylglutamine.

It belongs to the prokaryotic/mitochondrial release factor family. Post-translationally, methylated by PrmC. Methylation increases the termination efficiency of RF1.

The protein localises to the cytoplasm. Its function is as follows. Peptide chain release factor 1 directs the termination of translation in response to the peptide chain termination codons UAG and UAA. The sequence is that of Peptide chain release factor 1 from Bacteroides fragilis (strain ATCC 25285 / DSM 2151 / CCUG 4856 / JCM 11019 / LMG 10263 / NCTC 9343 / Onslow / VPI 2553 / EN-2).